Here is a 404-residue protein sequence, read N- to C-terminus: DNA replication and repair protein RecF (404 aa).

ATP is bound at residue 30 to 37 (GSNGQGKT).

Belongs to the RecF family.

It is found in the cytoplasm. Its function is as follows. The RecF protein is involved in DNA metabolism; it is required for DNA replication and normal SOS inducibility. RecF binds preferentially to single-stranded, linear DNA. It also seems to bind ATP. In Clavibacter michiganensis subsp. michiganensis (strain NCPPB 382), this protein is DNA replication and repair protein RecF.